The primary structure comprises 144 residues: Deoxyuridine 5'-triphosphate nucleotidohydrolase (144 aa).

DUMP is bound by residues S66, R133, F138, and G139.

This sequence belongs to the dUTPase family. In terms of assembly, homotrimer. The cofactor is Mg(2+).

The enzyme catalyses dUTP + H2O = dUMP + diphosphate + H(+). Its pathway is pyrimidine metabolism; dUMP biosynthesis; dUMP from dCTP (dUTP route): step 2/2. Its function is as follows. Involved in nucleotide metabolism via production of dUMP, the immediate precursor of thymidine nucleotides, and decreases the intracellular concentration of dUTP so that uracil cannot be incorporated into DNA. This is Deoxyuridine 5'-triphosphate nucleotidohydrolase (DUT1) from Encephalitozoon cuniculi (strain GB-M1) (Microsporidian parasite).